A 175-amino-acid polypeptide reads, in one-letter code: ATP synthase subunit b (175 aa).

A helical membrane pass occupies residues 20-40 (LIFWTAVTFVIVLVILKKIAW).

Belongs to the ATPase B chain family. F-type ATPases have 2 components, F(1) - the catalytic core - and F(0) - the membrane proton channel. F(1) has five subunits: alpha(3), beta(3), gamma(1), delta(1), epsilon(1). F(0) has four main subunits: a(1), b(2) and c(10-14). The alpha and beta chains form an alternating ring which encloses part of the gamma chain. F(1) is attached to F(0) by a central stalk formed by the gamma and epsilon chains, while a peripheral stalk is formed by the delta and b chains.

It localises to the cell inner membrane. In terms of biological role, f(1)F(0) ATP synthase produces ATP from ADP in the presence of a proton or sodium gradient. F-type ATPases consist of two structural domains, F(1) containing the extramembraneous catalytic core and F(0) containing the membrane proton channel, linked together by a central stalk and a peripheral stalk. During catalysis, ATP synthesis in the catalytic domain of F(1) is coupled via a rotary mechanism of the central stalk subunits to proton translocation. Its function is as follows. Component of the F(0) channel, it forms part of the peripheral stalk, linking F(1) to F(0). This is ATP synthase subunit b from Chlorobaculum parvum (strain DSM 263 / NCIMB 8327) (Chlorobium vibrioforme subsp. thiosulfatophilum).